The primary structure comprises 521 residues: MPRGFLVKRSKKSTPVSYRVRGGEDSDRALLLSPGCGGARAEPPVPSPGPLPPPPPPALAERAHAALAAALACAPGPPPPPPPGPRAAHFGNPEAAHPAPLYSPTRPVSREHEKHKYFERSFNLGSPVSAESFPTPAALLAGGGSGANGAGGGGGGTCGGDALLFAPAELKMGTAFSAGAEAARGPGTGPPLSPAAALRPPGKRPAPPAAVATEPPAKAAKAPSAKKPKAIRKLHFEDEVTTSPVLGLKIKEGPVEAPRGRAGGATRPLGEFICQLCKEEYADPFALAQHKCSRIVRVEYRCPECAKVFSCPANLASHRRWHKPRPVPAAARAPEPEAATRAEAREAAGGGSSDRDTPSPGGVSESGSEDGLYECHHCAKKFRRQAYLRKHLLAHHQALQAKGAPPPPPPPPPPAEDILAFYAGPDEKAPQEASGDGEAAGVLGLSATAQCHLCPVCGETFPSKGAQERHLRLLHAAQVFPCKYCPATFYSSPGLTRHINKCHPSENRQVILLQVPVRPAC.

Residues 1 to 12 (MPRGFLVKRSKK) are compositionally biased toward basic residues. Positions 1–20 (MPRGFLVKRSKKSTPVSYRV) are SNAG domain. Disordered stretches follow at residues 1–59 (MPRG…PPAL), 76–107 (GPPP…PTRP), and 180–230 (AEAA…KPKA). Residues 2 to 7 (PRGFLV) are required and sufficient for interaction with KDM1A. A necessary for interaction with CCND1 region spans residues 43–56 (PPVPSPGPLPPPPP). Pro residues-rich tracts occupy residues 43 to 58 (PPVP…PPPA) and 76 to 85 (GPPPPPPPGP). Over residues 209–223 (AAVATEPPAKAAKAP) the composition is skewed to low complexity. The segment at 272–292 (FICQLCKEEYADPFALAQHKC) adopts a C2H2-type 1; atypical zinc-finger fold. Residues 300 to 322 (YRCPECAKVFSCPANLASHRRWH) form a C2H2-type 2 zinc finger. The tract at residues 320 to 369 (RWHKPRPVPAAARAPEPEAATRAEAREAAGGGSSDRDTPSPGGVSESGSE) is disordered. Over residues 334-346 (PEPEAATRAEARE) the composition is skewed to basic and acidic residues. The segment at 373–395 (YECHHCAKKFRRQAYLRKHLLAH) adopts a C2H2-type 3 zinc-finger fold. The interval 398–419 (ALQAKGAPPPPPPPPPPAEDIL) is disordered. A compositionally biased stretch (pro residues) spans 404 to 415 (APPPPPPPPPPA). C2H2-type zinc fingers lie at residues 452–475 (HLCP…RLLH) and 480–503 (FPCK…NKCH).

Belongs to the INSM1 family. As to quaternary structure, interacts (via the N-terminal region) with CCND1 (via cyclin N-terminal domain); the interaction competes with the binding of CCND1 to CDK4 during cell cycle progression and increases its transcriptional repressor activity. Interacts with HDAC3; the interaction increases its transcriptional repressor activity. Interacts (via the SNAG domain) with HDAC1. Interacts (via the SNAG domain) with HDAC2. Interacts (via the SNAG domain) with KDM1A. Interacts (via the SNAG domain) with RCOR1. Interacts with SORBS1. In terms of tissue distribution, expressed in adrenal gland. Expressed in the dentate gyrus of the hippocampus and the wall of the lateral ventricle. Expressed in pancreatic and intestinal endocrine cells.

Its subcellular location is the nucleus. Functionally, sequence-specific DNA-binding transcriptional regulator that plays a key role in neurogenesis and neuroendocrine cell differentiation during embryonic and/or fetal development. Binds to the consensus sequence 5'-[TG][TC][TC][TT][GA]GGG[CG]A-3' in target promoters. Acts as a transcriptional repressor of NEUROD1 and INS expression via its interaction with cyclin CCND1 in a cell cycle-independent manner. Negatively regulates skeletal muscle-specific gene expression in endocrine cells of the pituitary by inhibiting the Notch signaling pathway. Represses target gene transcription by recruiting chromatin-modifying factors, such as HDAC1, HDAC2, HDAC3, KDM1A and RCOR1 histone deacetylases. Binds to its own promoter, suggesting autoregulation as a self-control feedback mechanism. Competes with histone H3 for the same binding site on the histone demethylase complex formed by KDM1A and RCOR1, and thereby inhibits demethylation of histone H3 at 'Lys-4'. Promotes the generation and expansion of neuronal basal progenitor cells in the developing neocortex. Involved in the differentiation of endocrine cells of the developing anterior pituitary gland, of the pancreas and intestine, and of sympatho-adrenal cells in the peripheral nervous system. Promotes cell cycle signaling arrest and inhibition of cellular proliferation. This chain is Insulinoma-associated protein 1 (Insm1), found in Mus musculus (Mouse).